The primary structure comprises 294 residues: Ribosomal RNA small subunit methyltransferase H (294 aa).

S-adenosyl-L-methionine-binding positions include 31–33, Asp-49, Phe-76, Asp-97, and Gln-104; that span reads GGY.

The protein belongs to the methyltransferase superfamily. RsmH family.

It localises to the cytoplasm. The enzyme catalyses cytidine(1402) in 16S rRNA + S-adenosyl-L-methionine = N(4)-methylcytidine(1402) in 16S rRNA + S-adenosyl-L-homocysteine + H(+). Specifically methylates the N4 position of cytidine in position 1402 (C1402) of 16S rRNA. This is Ribosomal RNA small subunit methyltransferase H from Wolbachia pipientis subsp. Culex pipiens (strain wPip).